The sequence spans 1783 residues: Trans-splicing factor Raa3, chloroplastic (1783 aa).

The N-terminal 40 residues, 1–40 (MKADLATAKGSSPAFSAPRTYRARLLSRCLNKCFNTVLVS), are a transit peptide targeting the chloroplast. Disordered regions lie at residues 97–378 (ATTH…VGVN), 420–484 (ATSA…VAAQ), 563–610 (ARVG…SATK), 652–709 (STEP…SPAA), 918–971 (AAPT…QRAS), 1395–1427 (RDAK…QQHQ), 1476–1506 (PAPA…RRSR), and 1620–1639 (VKGR…DVQG). Over residues 105–118 (DSGGQGPAAAGGRG) the composition is skewed to gly residues. Low complexity-rich tracts occupy residues 126-157 (QAAA…PQRP), 186-205 (AVDA…PAPA), and 224-242 (AGKP…VGPQ). Residues 256-273 (DESHMGLTHRDQGHDERI) show a composition bias toward basic and acidic residues. Over residues 277 to 289 (AGEAWKAGAVAAP) the composition is skewed to low complexity. The span at 307–316 (LASSALGTHS) shows a compositional bias: polar residues. 7 stretches are compositionally biased toward low complexity: residues 343-374 (SGSS…ITSN), 420-436 (ATSA…SSSS), 577-599 (RPVQ…SQPG), 655-669 (PLAA…ASAS), 676-709 (SSSN…SPAA), 928-970 (SAAA…PQRA), and 1403-1417 (QSAA…AAQD). Basic residues-rich tracts occupy residues 1494 to 1506 (KSRR…RRSR) and 1620 to 1630 (VKGRGRGRRTA). Residues 1713–1772 (LAVGAAAGGAVIRNSRWLLSGAGALRRRLLTHAGWLVVPVRERQWKDLRSAEQQRRVVRE) enclose the RAP domain.

Part of a 1700 kDa complex that includes the precursor RNA to exon 1 and the tscA RNA.

It localises to the plastid. The protein resides in the chloroplast stroma. Its function is as follows. Required for trans-splicing of exons 1 and 2 of the chloroplast encoded psaA mRNA (a group II intron). May be required for stability of the chloroplast RNA-protein complex in which it is found. The sequence is that of Trans-splicing factor Raa3, chloroplastic (RAA3) from Chlamydomonas reinhardtii (Chlamydomonas smithii).